The following is a 654-amino-acid chain: tRNA 5-methylaminomethyl-2-thiouridine biosynthesis bifunctional protein MnmC (654 aa).

The tRNA (mnm(5)s(2)U34)-methyltransferase stretch occupies residues 1–235; sequence MSDFQHAQLD…KREMLGGTYQ (235 aa). The interval 261–654 is FAD-dependent cmnm(5)s(2)U34 oxidoreductase; that stretch reads VGGGLAGCAS…LRDLVRGQRG (394 aa).

This sequence in the N-terminal section; belongs to the methyltransferase superfamily. tRNA (mnm(5)s(2)U34)-methyltransferase family. It in the C-terminal section; belongs to the DAO family. FAD serves as cofactor.

The protein localises to the cytoplasm. The catalysed reaction is 5-aminomethyl-2-thiouridine(34) in tRNA + S-adenosyl-L-methionine = 5-methylaminomethyl-2-thiouridine(34) in tRNA + S-adenosyl-L-homocysteine + H(+). In terms of biological role, catalyzes the last two steps in the biosynthesis of 5-methylaminomethyl-2-thiouridine (mnm(5)s(2)U) at the wobble position (U34) in tRNA. Catalyzes the FAD-dependent demodification of cmnm(5)s(2)U34 to nm(5)s(2)U34, followed by the transfer of a methyl group from S-adenosyl-L-methionine to nm(5)s(2)U34, to form mnm(5)s(2)U34. This is tRNA 5-methylaminomethyl-2-thiouridine biosynthesis bifunctional protein MnmC from Pseudomonas paraeruginosa (strain DSM 24068 / PA7) (Pseudomonas aeruginosa (strain PA7)).